The sequence spans 839 residues: MKVPMSWLQAMVNLPDGTTTDKVAKALTNHTATVEKVEVVGGELTGPIVIGHILSSVPEPQKNGKVINWCRVDVGPRYNAEGHPKNIEEGVEGRGIICGAPNAVEGAWVVVSLPGAVLPGGFAISARKTYGHMSDGMLCASDELGIGVDDAGIITLPPSVEGHQLVPGEDALPILGVPEEVLDVDVTPDIGYCMSMRGIAREVAHAMSVHFRDPYDEEPIGPVLGPVAVDVQSDACSQFIALPVSGMNLGAPTPRFITDRITRAGMRPINLVVDVTNYVMLESGQPLHAYDADNVSGTIVVRKAHEGEHLLTLDDTDRTLDPDDLVIADDSGAIGLAGVMGGAATEVTAETTSIILEGAHFDPMTVARAYRRHKLGSEASRRFERGVDPICAHTAAVRAAELLAQYGGATVGEPTVVGEVPEMPRQTINADLPNRILGTKVPTEEVIEILTRSGVKVTALGDSLHLVAPTWRPDLVDAYDYVEEIGRKIGFDRIKAVLPPSLGASGLTKAQRGRRRVLRSVVEAGFVELITLPFIGDKDLDVLGISGDDTRHATVKLANPLDDTRPYLRTTLLPGLFHAVTTNMSRSQDDLAVFESGTVFRAVTPAAAPRPGVDERPSDEVLAEIDAALPAQPRMLAAVICGSWLPDRWDGESVKADWRHAVLVAQKAADALGVRLVRKADRQAPWHPGRCAALIVDGKVIGHAGELHPTVVSKAGLPQRTCAVEFNLDALVAAAPRGGEVMAISSFPVAKEDVALVVDKSVAAEDVRQALIEGAGPLLESIELFDVYEGEQVGDNRKSLAFNLRLRGADRTLTDSEALETRDAAVARAEETCGAQLRS.

Residues 42–166 form the tRNA-binding domain; it reads GELTGPIVIG…PPSVEGHQLV (125 aa). In terms of domain architecture, B5 spans 421–496; it reads PEMPRQTINA…RKIGFDRIKA (76 aa). Mg(2+) contacts are provided by aspartate 474, aspartate 480, glutamate 483, and glutamate 484. The FDX-ACB domain occupies 745–838; sequence SSFPVAKEDV…AEETCGAQLR (94 aa).

Belongs to the phenylalanyl-tRNA synthetase beta subunit family. Type 1 subfamily. Tetramer of two alpha and two beta subunits. The cofactor is Mg(2+).

The protein resides in the cytoplasm. It carries out the reaction tRNA(Phe) + L-phenylalanine + ATP = L-phenylalanyl-tRNA(Phe) + AMP + diphosphate + H(+). This chain is Phenylalanine--tRNA ligase beta subunit, found in Cutibacterium acnes (strain DSM 16379 / KPA171202) (Propionibacterium acnes).